The following is a 130-amino-acid chain: Protein ApaG (130 aa).

Positions 3-127 (KAETRGISVI…FSLDVPHMRR (125 aa)) constitute an ApaG domain.

The polypeptide is Protein ApaG (Methylobacterium nodulans (strain LMG 21967 / CNCM I-2342 / ORS 2060)).